Reading from the N-terminus, the 241-residue chain is Ribosomal RNA small subunit methyltransferase G (241 aa).

Residues Gly-79, Phe-84, 130–131 (AE), and Arg-150 contribute to the S-adenosyl-L-methionine site.

This sequence belongs to the methyltransferase superfamily. RNA methyltransferase RsmG family.

Its subcellular location is the cytoplasm. Functionally, specifically methylates the N7 position of a guanine in 16S rRNA. The polypeptide is Ribosomal RNA small subunit methyltransferase G (Limosilactobacillus reuteri (strain DSM 20016) (Lactobacillus reuteri)).